A 101-amino-acid polypeptide reads, in one-letter code: Large ribosomal subunit protein uL24c (101 aa).

The protein belongs to the universal ribosomal protein uL24 family. Part of the 50S ribosomal subunit.

The protein resides in the plastid. It localises to the chloroplast. In terms of biological role, one of two assembly initiator proteins, it binds directly to the 5'-end of the 23S rRNA, where it nucleates assembly of the 50S subunit. This Guillardia theta (Cryptophyte) protein is Large ribosomal subunit protein uL24c (rpl24).